Consider the following 113-residue polypeptide: MNRLDFVDQASLRDDIPAFSPGDTINVHVKVIEGVKERIQVFKGVVIRRQGGGIRETFTVRKESYGVGVERTFPVHSPNIDHIEMVIRGDVRRAKLYYLRELRGKKAKIKEKR.

Belongs to the bacterial ribosomal protein bL19 family.

Functionally, this protein is located at the 30S-50S ribosomal subunit interface and may play a role in the structure and function of the aminoacyl-tRNA binding site. This chain is Large ribosomal subunit protein bL19, found in Mycobacterium leprae (strain Br4923).